The chain runs to 281 residues: Probable endonuclease 4 (281 aa).

The Zn(2+) site is built by His68, His108, Glu145, Asp179, His182, His216, Asp229, His231, and Glu261.

This sequence belongs to the AP endonuclease 2 family. Zn(2+) is required as a cofactor.

The catalysed reaction is Endonucleolytic cleavage to 5'-phosphooligonucleotide end-products.. In terms of biological role, endonuclease IV plays a role in DNA repair. It cleaves phosphodiester bonds at apurinic or apyrimidinic (AP) sites, generating a 3'-hydroxyl group and a 5'-terminal sugar phosphate. The protein is Probable endonuclease 4 of Trichlorobacter lovleyi (strain ATCC BAA-1151 / DSM 17278 / SZ) (Geobacter lovleyi).